The chain runs to 280 residues: Vacuolar protein sorting-associated protein 71 (280 aa).

The segment covering 64 to 73 (RSEGDGNSIS) has biased composition (polar residues). Positions 64–92 (RSEGDGNSISRQDDRNSKNSHSFEERYTQ) are disordered. Residues 74-92 (RQDDRNSKNSHSFEERYTQ) show a composition bias toward basic and acidic residues. Zn(2+)-binding residues include cysteine 244, cysteine 247, cysteine 256, cysteine 259, cysteine 264, cysteine 268, histidine 272, and cysteine 277. The segment at 244–277 (CSICGGYDSISSCVNCGNKICSVSCFKLHNETRC) adopts an HIT-type zinc-finger fold.

As to quaternary structure, belongs to the SWR1 complex at least composed of ACT1, ARP4, RVB1, RVB2, ARP6, YAF9, VPS71, VPS72, SWC3, SWC4, SWC5, SWR1 and HTZ1.

The protein resides in the nucleus. Participates in the catalytic exchange of histone H2A for the H2A variant HZT1, an euchromatin-specific factor, leading to chromatin remodeling and changes in transcription of targeted genes. Indirectly involved in vacuolar protein sorting. The protein is Vacuolar protein sorting-associated protein 71 (VPS71) of Saccharomyces cerevisiae (strain ATCC 204508 / S288c) (Baker's yeast).